The sequence spans 212 residues: MIIAIDGPAASGKGTLGKRLAAHYGFRHLDTGVIYRAVAKALLDGGADLTDEARAVAAARKLDPGIFGDPALKSQTVGDAASVISAYAPLREALVSFQRQFAADPPGAVLDGRDIGTVICPDADVKIFVIADPVVRARRRTLEALARGEAADEARVLADILKRDERDRNRSAAPLTQAPDAVLLDNSNLDIEGGVRAAIDIVEAVRAGRRRV.

An ATP-binding site is contributed by 7–15; the sequence is GPAASGKGT.

Belongs to the cytidylate kinase family. Type 1 subfamily.

It localises to the cytoplasm. The enzyme catalyses CMP + ATP = CDP + ADP. The catalysed reaction is dCMP + ATP = dCDP + ADP. This chain is Cytidylate kinase, found in Rhodopseudomonas palustris (strain BisB5).